Consider the following 72-residue polypeptide: Translation initiation factor IF-1 (72 aa).

The S1-like domain maps to 1-72 (MSKEDSIEVT…TKGRITFRHR (72 aa)).

It belongs to the IF-1 family. Component of the 30S ribosomal translation pre-initiation complex which assembles on the 30S ribosome in the order IF-2 and IF-3, IF-1 and N-formylmethionyl-tRNA(fMet); mRNA recruitment can occur at any time during PIC assembly.

The protein resides in the cytoplasm. Functionally, one of the essential components for the initiation of protein synthesis. Stabilizes the binding of IF-2 and IF-3 on the 30S subunit to which N-formylmethionyl-tRNA(fMet) subsequently binds. Helps modulate mRNA selection, yielding the 30S pre-initiation complex (PIC). Upon addition of the 50S ribosomal subunit IF-1, IF-2 and IF-3 are released leaving the mature 70S translation initiation complex. This is Translation initiation factor IF-1 from Solibacter usitatus (strain Ellin6076).